A 300-amino-acid chain; its full sequence is Chaperone protein dnaJ 50 (300 aa).

Positions 1-27 (MAPPVTERWCLALILLFLSLFVQSSTA) are cleaved as a signal peptide. Residues 28–122 (IYCGAEDCYA…RAKYGHKSDP (95 aa)) are Lumenal-facing. Residues 34–98 (DCYALLGVAQ…TTRAQYDYAI (65 aa)) form the J domain. N-linked (GlcNAc...) asparagine glycosylation is found at Asn46 and Asn88. The chain crosses the membrane as a helical span at residues 123-143 (RAVLVGLLVVLSAFQYLNNVA). The Cytoplasmic portion of the chain corresponds to 144 to 206 (RYNEAIATVK…LQIKGAEKPS (63 aa)). A helical membrane pass occupies residues 207–227 (VWELLGVRFILLPYTIIKLLV). Residues 228-300 (WYSSWVWRYK…EMRKESKRRR (73 aa)) are Lumenal-facing.

Expressed in leaves, flower buds and flowers.

The protein localises to the endoplasmic reticulum membrane. May play a role in protein folding in the endoplasmic reticulum. The polypeptide is Chaperone protein dnaJ 50 (C50) (Arabidopsis thaliana (Mouse-ear cress)).